A 457-amino-acid chain; its full sequence is Cysteine--tRNA ligase (457 aa).

Position 30 (Cys-30) interacts with Zn(2+). The 'HIGH' region motif lies at 32 to 42 (PTVYDRAHLGN). Zn(2+) is bound by residues Cys-213, His-238, and Glu-242. The 'KMSKS' region motif lies at 271 to 275 (KMSKS). Lys-274 is an ATP binding site.

This sequence belongs to the class-I aminoacyl-tRNA synthetase family. Monomer. Requires Zn(2+) as cofactor.

It localises to the cytoplasm. The enzyme catalyses tRNA(Cys) + L-cysteine + ATP = L-cysteinyl-tRNA(Cys) + AMP + diphosphate. The chain is Cysteine--tRNA ligase from Ruegeria sp. (strain TM1040) (Silicibacter sp.).